The sequence spans 273 residues: Fos-related antigen 1 (273 aa).

2 disordered regions span residues methionine 1–serine 46 and glycine 60–arginine 114. A compositionally biased stretch (low complexity) spans glutamate 7–glutamine 35. Residues glutamate 105 to histidine 168 enclose the bZIP domain. The segment at arginine 107–lysine 127 is basic motif. The segment at leucine 133–leucine 161 is leucine-zipper. Residues arginine 169–proline 182 show a composition bias toward basic and acidic residues. Residues arginine 169–leucine 273 are disordered. Composition is skewed to low complexity over residues leucine 217–leucine 235 and serine 254–leucine 273. Serine 267 is subject to Phosphoserine.

The protein belongs to the bZIP family. Fos subfamily. In terms of assembly, heterodimer. Interacts with the BAF multiprotein chromatin-remodeling complex subunits SMARCB1 and SMARCD1. Interacts with ARID1A and JUN.

It is found in the nucleus. The chain is Fos-related antigen 1 (Fosl1) from Mus musculus (Mouse).